Reading from the N-terminus, the 628-residue chain is E3 SUMO-protein ligase PIAS3 (628 aa).

Residues 1-200 (MAELGELKHM…QLRFCLCETS (200 aa)) form an interaction with CCAR2 region. Positions 11-45 (VMSFRVSELQVLLGFAGRNKSGRKHELLAKALHLL) constitute an SAP domain. The LXXLL motif motif lies at 19 to 23 (LQVLL). Glycyl lysine isopeptide (Lys-Gly) (interchain with G-Cter in SUMO2) cross-links involve residues Lys-46, Lys-56, Lys-230, and Lys-307. One can recognise a PINIT domain in the interval 115–280 (MHPPLPQPVH…SLSVYLVRQL (166 aa)). Residues 312–393 (PDSEVATTSL…FMEILSSCSD (82 aa)) form an SP-RING-type zinc finger. Cys-343, His-345, Cys-366, and Cys-369 together coordinate Zn(2+). The interval 450 to 460 (LTIESSSDEED) is SUMO1-binding. Residues Lys-466 and Lys-482 each participate in a glycyl lysine isopeptide (Lys-Gly) (interchain with G-Cter in SUMO2) cross-link. Residues 597–617 (VAPGGALREGHGGPLPSGPSL) are disordered.

Belongs to the PIAS family. In terms of assembly, monomer. Binds SUMO1 and UBE2I. Interacts with BCL11A, HMGA2, IRF1, MITF and NCOA2. Interacts with STAT5; the interaction occurs on stimulation by PRL. Interacts with GFI1; the interaction relieves the inhibitory effect of PIAS3 on STAT3-mediated transcriptional activity. Interacts with AR, PLAG1 and ZFHX3. Interacts with STAT3; the interaction occurs on stimulation by IL6, CNTF or OSM and inhibits the DNA binding activity of STAT3. Interacts with MTA1. Interacts with CCAR2 (via N-terminus). Interacts with TRIM8. Interacts with PRDM1/Blimp-1. Sumoylated. In terms of tissue distribution, widely expressed.

It is found in the cytoplasm. The protein localises to the nucleus. The protein resides in the nucleus speckle. It participates in protein modification; protein sumoylation. In terms of biological role, functions as an E3-type small ubiquitin-like modifier (SUMO) ligase, stabilizing the interaction between UBE2I and the substrate, and as a SUMO-tethering factor. Plays a crucial role as a transcriptional coregulation in various cellular pathways, including the STAT pathway and the steroid hormone signaling pathway. Involved in regulating STAT3 signaling via inhibiting STAT3 DNA-binding and suppressing cell growth. Enhances the sumoylation of MTA1 and may participate in its paralog-selective sumoylation. Sumoylates CCAR2 which promotes its interaction with SIRT1. Diminishes the sumoylation of ZFHX3 by preventing the colocalization of ZFHX3 with SUMO1 in the nucleus. The sequence is that of E3 SUMO-protein ligase PIAS3 (PIAS3) from Homo sapiens (Human).